The sequence spans 372 residues: Queuine tRNA-ribosyltransferase (372 aa).

The active-site Proton acceptor is the Asp-92. Substrate contacts are provided by residues Asp-92–Tyr-96, Asp-146, Gln-188, and Gly-215. Positions Gly-246 to Glu-252 are RNA binding. Asp-265 (nucleophile) is an active-site residue. The tract at residues Thr-270–Arg-274 is RNA binding; important for wobble base 34 recognition. Positions 303, 305, 308, and 334 each coordinate Zn(2+).

The protein belongs to the queuine tRNA-ribosyltransferase family. In terms of assembly, homodimer. Within each dimer, one monomer is responsible for RNA recognition and catalysis, while the other monomer binds to the replacement base PreQ1. It depends on Zn(2+) as a cofactor.

It carries out the reaction 7-aminomethyl-7-carbaguanine + guanosine(34) in tRNA = 7-aminomethyl-7-carbaguanosine(34) in tRNA + guanine. It functions in the pathway tRNA modification; tRNA-queuosine biosynthesis. Catalyzes the base-exchange of a guanine (G) residue with the queuine precursor 7-aminomethyl-7-deazaguanine (PreQ1) at position 34 (anticodon wobble position) in tRNAs with GU(N) anticodons (tRNA-Asp, -Asn, -His and -Tyr). Catalysis occurs through a double-displacement mechanism. The nucleophile active site attacks the C1' of nucleotide 34 to detach the guanine base from the RNA, forming a covalent enzyme-RNA intermediate. The proton acceptor active site deprotonates the incoming PreQ1, allowing a nucleophilic attack on the C1' of the ribose to form the product. After dissociation, two additional enzymatic reactions on the tRNA convert PreQ1 to queuine (Q), resulting in the hypermodified nucleoside queuosine (7-(((4,5-cis-dihydroxy-2-cyclopenten-1-yl)amino)methyl)-7-deazaguanosine). This Prochlorococcus marinus subsp. pastoris (strain CCMP1986 / NIES-2087 / MED4) protein is Queuine tRNA-ribosyltransferase.